The primary structure comprises 858 residues: Protein translocase subunit SecA (858 aa).

Residues glutamine 88, glycine 106–threonine 110, and aspartate 494 each bind ATP. Positions lysine 808–arginine 848 are disordered. Residues cysteine 842, cysteine 844, cysteine 853, and cysteine 854 each coordinate Zn(2+).

Belongs to the SecA family. Monomer and homodimer. Part of the essential Sec protein translocation apparatus which comprises SecA, SecYEG and auxiliary proteins SecDF-YajC and YidC. Zn(2+) is required as a cofactor.

Its subcellular location is the cell inner membrane. The protein localises to the cytoplasm. It carries out the reaction ATP + H2O + cellular proteinSide 1 = ADP + phosphate + cellular proteinSide 2.. Its function is as follows. Part of the Sec protein translocase complex. Interacts with the SecYEG preprotein conducting channel. Has a central role in coupling the hydrolysis of ATP to the transfer of proteins into and across the cell membrane, serving as an ATP-driven molecular motor driving the stepwise translocation of polypeptide chains across the membrane. This chain is Protein translocase subunit SecA, found in Desulfovibrio desulfuricans (strain ATCC 27774 / DSM 6949 / MB).